The sequence spans 470 residues: Ribosomal protein uS12 methylthiotransferase RimO (470 aa).

The MTTase N-terminal domain occupies 33–143; that stretch reads NKIGFVSLGC…VLEHVHQYAP (111 aa). Residues cysteine 42, cysteine 78, cysteine 107, cysteine 175, cysteine 179, and cysteine 182 each coordinate [4Fe-4S] cluster. Residues 161–398 enclose the Radical SAM core domain; sequence LTPKHYAYLK…MLVQQEISAA (238 aa). The TRAM domain occupies 401–467; the sequence is QKRIGSTMQV…EYDLWGSILH (67 aa).

The protein belongs to the methylthiotransferase family. RimO subfamily. Requires [4Fe-4S] cluster as cofactor.

Its subcellular location is the cytoplasm. It carries out the reaction L-aspartate(89)-[ribosomal protein uS12]-hydrogen + (sulfur carrier)-SH + AH2 + 2 S-adenosyl-L-methionine = 3-methylsulfanyl-L-aspartate(89)-[ribosomal protein uS12]-hydrogen + (sulfur carrier)-H + 5'-deoxyadenosine + L-methionine + A + S-adenosyl-L-homocysteine + 2 H(+). Functionally, catalyzes the methylthiolation of an aspartic acid residue of ribosomal protein uS12. In Vibrio cholerae serotype O1 (strain ATCC 39315 / El Tor Inaba N16961), this protein is Ribosomal protein uS12 methylthiotransferase RimO.